The chain runs to 207 residues: ATP-dependent Clp protease proteolytic subunit (207 aa).

The active-site Nucleophile is the Ser-111. Residue His-136 is part of the active site.

Belongs to the peptidase S14 family. As to quaternary structure, fourteen ClpP subunits assemble into 2 heptameric rings which stack back to back to give a disk-like structure with a central cavity, resembling the structure of eukaryotic proteasomes.

It localises to the cytoplasm. The enzyme catalyses Hydrolysis of proteins to small peptides in the presence of ATP and magnesium. alpha-casein is the usual test substrate. In the absence of ATP, only oligopeptides shorter than five residues are hydrolyzed (such as succinyl-Leu-Tyr-|-NHMec, and Leu-Tyr-Leu-|-Tyr-Trp, in which cleavage of the -Tyr-|-Leu- and -Tyr-|-Trp bonds also occurs).. In terms of biological role, cleaves peptides in various proteins in a process that requires ATP hydrolysis. Has a chymotrypsin-like activity. Plays a major role in the degradation of misfolded proteins. The protein is ATP-dependent Clp protease proteolytic subunit of Proteus mirabilis (strain HI4320).